The chain runs to 359 residues: Protein mab-21-like 2-B (359 aa).

It belongs to the mab-21 family.

The protein resides in the nucleus. The protein localises to the cytoplasm. Functionally, required for several aspects of embryonic development including normal development of the eye. The polypeptide is Protein mab-21-like 2-B (mab21l2-b) (Xenopus laevis (African clawed frog)).